A 526-amino-acid polypeptide reads, in one-letter code: Maturase K (526 aa).

This sequence belongs to the intron maturase 2 family. MatK subfamily.

The protein localises to the plastid. It is found in the chloroplast. Its function is as follows. Usually encoded in the trnK tRNA gene intron. Probably assists in splicing its own and other chloroplast group II introns. In Iris setosa (Hiougi-ayame), this protein is Maturase K.